A 798-amino-acid polypeptide reads, in one-letter code: Phenylalanine--tRNA ligase beta subunit (798 aa).

The tRNA-binding domain maps to 38–148 (IGNYEKVVVG…PEAPVGEKIE (111 aa)). Residues 400-475 (FTPKVIAVSL…RYLGYNNFPD (76 aa)) enclose the B5 domain. Mg(2+) is bound by residues Asp-453, Asp-459, Glu-462, and Glu-463. The FDX-ACB domain occupies 703–796 (SPYPEVKRDI…LEAKTGAKLR (94 aa)).

The protein belongs to the phenylalanyl-tRNA synthetase beta subunit family. Type 1 subfamily. In terms of assembly, tetramer of two alpha and two beta subunits. Mg(2+) is required as a cofactor.

It is found in the cytoplasm. The catalysed reaction is tRNA(Phe) + L-phenylalanine + ATP = L-phenylalanyl-tRNA(Phe) + AMP + diphosphate + H(+). This Carboxydothermus hydrogenoformans (strain ATCC BAA-161 / DSM 6008 / Z-2901) protein is Phenylalanine--tRNA ligase beta subunit.